The sequence spans 580 residues: Arginine--tRNA ligase (580 aa).

The short motif at 131-141 is the 'HIGH' region element; that stretch reads ANPTGPMHVGH.

This sequence belongs to the class-I aminoacyl-tRNA synthetase family. Monomer.

It is found in the cytoplasm. The enzyme catalyses tRNA(Arg) + L-arginine + ATP = L-arginyl-tRNA(Arg) + AMP + diphosphate. The polypeptide is Arginine--tRNA ligase (Cereibacter sphaeroides (strain ATCC 17025 / ATH 2.4.3) (Rhodobacter sphaeroides)).